A 291-amino-acid polypeptide reads, in one-letter code: Phosphatidylglycerol--prolipoprotein diacylglyceryl transferase (291 aa).

The next 7 membrane-spanning stretches (helical) occupy residues 21 to 41, 60 to 80, 96 to 116, 124 to 144, 198 to 218, 225 to 245, and 258 to 278; these read IALHWYGFMYLVGFVFAMWLA, LLYAGFAGVFVGGRLGYVLFY, WDGGMSFHGGLVGVICAMWWF, FLQVADFIAPLVPFGLGMGRI, SQLYEMALEGIVLFIILNLYI, GSVSGLFLIGYGIFRVIVEFF, and ISMGQILSIPMILAGILMMIW. R143 is a binding site for a 1,2-diacyl-sn-glycero-3-phospho-(1'-sn-glycerol).

Belongs to the Lgt family.

The protein resides in the cell inner membrane. The catalysed reaction is L-cysteinyl-[prolipoprotein] + a 1,2-diacyl-sn-glycero-3-phospho-(1'-sn-glycerol) = an S-1,2-diacyl-sn-glyceryl-L-cysteinyl-[prolipoprotein] + sn-glycerol 1-phosphate + H(+). The protein operates within protein modification; lipoprotein biosynthesis (diacylglyceryl transfer). Functionally, catalyzes the transfer of the diacylglyceryl group from phosphatidylglycerol to the sulfhydryl group of the N-terminal cysteine of a prolipoprotein, the first step in the formation of mature lipoproteins. The protein is Phosphatidylglycerol--prolipoprotein diacylglyceryl transferase of Photorhabdus laumondii subsp. laumondii (strain DSM 15139 / CIP 105565 / TT01) (Photorhabdus luminescens subsp. laumondii).